The following is a 329-amino-acid chain: Phenylalanine--tRNA ligase alpha subunit (329 aa).

Residue E254 coordinates Mg(2+).

Belongs to the class-II aminoacyl-tRNA synthetase family. Phe-tRNA synthetase alpha subunit type 1 subfamily. As to quaternary structure, tetramer of two alpha and two beta subunits. It depends on Mg(2+) as a cofactor.

It is found in the cytoplasm. The catalysed reaction is tRNA(Phe) + L-phenylalanine + ATP = L-phenylalanyl-tRNA(Phe) + AMP + diphosphate + H(+). This Mannheimia succiniciproducens (strain KCTC 0769BP / MBEL55E) protein is Phenylalanine--tRNA ligase alpha subunit.